The sequence spans 320 residues: Reticulocalbin-2 (320 aa).

The signal sequence occupies residues M1 to A25. EF-hand domains are found at residues E64–H99 and Y100–D135. The Ca(2+) site is built by D77, D79, D81, E88, D113, N115, D117, and E124. A Phosphothreonine modification is found at T140. EF-hand domains are found at residues F150 to E185, M189 to A224, W230 to G265, and I266 to S301. Residues D167, E176, D202, N204, D206, E213, D243, D245, D247, R249, E254, D279, N281, D283, K285, and E290 each coordinate Ca(2+). The Prevents secretion from ER signature appears at H317–L320.

It belongs to the CREC family.

The protein localises to the endoplasmic reticulum lumen. In terms of biological role, not known. Binds calcium. The chain is Reticulocalbin-2 (Rcn2) from Mus musculus (Mouse).